Here is a 293-residue protein sequence, read N- to C-terminus: 4-hydroxy-tetrahydrodipicolinate synthase (293 aa).

Thr-46 serves as a coordination point for pyruvate. Tyr-133 functions as the Proton donor/acceptor in the catalytic mechanism. The active-site Schiff-base intermediate with substrate is Lys-161. Val-202 lines the pyruvate pocket.

Belongs to the DapA family. In terms of assembly, homotetramer; dimer of dimers.

Its subcellular location is the cytoplasm. It carries out the reaction L-aspartate 4-semialdehyde + pyruvate = (2S,4S)-4-hydroxy-2,3,4,5-tetrahydrodipicolinate + H2O + H(+). Its pathway is amino-acid biosynthesis; L-lysine biosynthesis via DAP pathway; (S)-tetrahydrodipicolinate from L-aspartate: step 3/4. In terms of biological role, catalyzes the condensation of (S)-aspartate-beta-semialdehyde [(S)-ASA] and pyruvate to 4-hydroxy-tetrahydrodipicolinate (HTPA). The sequence is that of 4-hydroxy-tetrahydrodipicolinate synthase from Wolbachia pipientis subsp. Culex pipiens (strain wPip).